The sequence spans 157 residues: Small ribosomal subunit protein uS13 (157 aa).

It belongs to the universal ribosomal protein uS13 family. Part of the 30S ribosomal subunit. Forms a loose heterodimer with protein S19. Forms two bridges to the 50S subunit in the 70S ribosome.

In terms of biological role, located at the top of the head of the 30S subunit, it contacts several helices of the 16S rRNA. In the 70S ribosome it contacts the 23S rRNA (bridge B1a) and protein L5 of the 50S subunit (bridge B1b), connecting the 2 subunits; these bridges are implicated in subunit movement. The chain is Small ribosomal subunit protein uS13 from Thermofilum pendens (strain DSM 2475 / Hrk 5).